The sequence spans 400 residues: Argininosuccinate synthase (400 aa).

Residue A8–S16 participates in ATP binding. Position 87 (Y87) interacts with L-citrulline. G117 lines the ATP pocket. L-aspartate contacts are provided by T119, N123, and D124. N123 is a binding site for L-citrulline. L-citrulline is bound by residues R127, S175, E260, and Y272.

Belongs to the argininosuccinate synthase family. Type 1 subfamily. Homotetramer.

The protein localises to the cytoplasm. The catalysed reaction is L-citrulline + L-aspartate + ATP = 2-(N(omega)-L-arginino)succinate + AMP + diphosphate + H(+). It functions in the pathway amino-acid biosynthesis; L-arginine biosynthesis; L-arginine from L-ornithine and carbamoyl phosphate: step 2/3. The sequence is that of Argininosuccinate synthase from Mycolicibacterium vanbaalenii (strain DSM 7251 / JCM 13017 / BCRC 16820 / KCTC 9966 / NRRL B-24157 / PYR-1) (Mycobacterium vanbaalenii).